The sequence spans 220 residues: Adapter protein MecA (220 aa).

The protein belongs to the MecA family. Homodimer.

Functionally, enables the recognition and targeting of unfolded and aggregated proteins to the ClpC protease or to other proteins involved in proteolysis. This chain is Adapter protein MecA, found in Macrococcus caseolyticus (strain JCSC5402) (Macrococcoides caseolyticum).